The chain runs to 360 residues: Isopentenyl-diphosphate delta-isomerase (360 aa).

12-13 (RK) contributes to the substrate binding site. FMN is bound by residues Ser70, 71 to 73 (SMT), Ser101, and Asn130. Residue 101 to 103 (SMR) coordinates substrate. Gln165 lines the substrate pocket. Residue Glu166 participates in Mg(2+) binding. Residues Lys197, 288–290 (GIR), and 309–310 (AG) each bind FMN.

It belongs to the IPP isomerase type 2 family. In terms of assembly, homooctamer. Dimer of tetramers. It depends on FMN as a cofactor. NADPH is required as a cofactor. The cofactor is Mg(2+).

Its subcellular location is the cytoplasm. It catalyses the reaction isopentenyl diphosphate = dimethylallyl diphosphate. Functionally, involved in the biosynthesis of isoprenoids. Catalyzes the 1,3-allylic rearrangement of the homoallylic substrate isopentenyl (IPP) to its allylic isomer, dimethylallyl diphosphate (DMAPP). This chain is Isopentenyl-diphosphate delta-isomerase, found in Chlorobium limicola (strain DSM 245 / NBRC 103803 / 6330).